We begin with the raw amino-acid sequence, 408 residues long: MDPKILERLRLGLSDDERRLVIRSATGGEEVTEYSFGIEEEYFLVDAKTLDVAIRTPDDLFDAANWSTGGQAMREMLQAQLEVATNVHVDVGDAREELKFLRREVASVAGQYGLTILACSTHPTALWRNSQPTPKPRYAEMMEDLRIVGQRNMLCGMHVHVQLPDPDRRFAVMRAMIPYIPVFIALSASSPFWNSRETGLKGYRLAAYDELPRTGLPELFTSKKQYDRYVAALTKSGVMPDESHVWWAMRPSLRHPTLELRAPDVCTAVDDAVAIASLYRALARHLYLNPELADAVGNVERAIAVENKWRAQRYGTDCLFVTEDGPVTGQEILNRTIADVAEHAEALGCLAEVERCRTIMQFGSSADYQLQAYRESGGQLAAVTQWIAAATVSRAEPPQSQPSVEPVR.

The protein belongs to the glutamate--cysteine ligase type 2 family. YbdK subfamily.

It carries out the reaction L-cysteine + L-glutamate + ATP = gamma-L-glutamyl-L-cysteine + ADP + phosphate + H(+). Its function is as follows. ATP-dependent carboxylate-amine ligase which exhibits weak glutamate--cysteine ligase activity. The chain is Putative glutamate--cysteine ligase 2 from Bradyrhizobium sp. (strain ORS 278).